The primary structure comprises 94 residues: Integration host factor subunit beta (94 aa).

It belongs to the bacterial histone-like protein family. In terms of assembly, heterodimer of an alpha and a beta chain.

This protein is one of the two subunits of integration host factor, a specific DNA-binding protein that functions in genetic recombination as well as in transcriptional and translational control. This is Integration host factor subunit beta from Haemophilus influenzae (strain 86-028NP).